Consider the following 274-residue polypeptide: Large ribosomal subunit protein uL2 (274 aa).

Residues Val223–Lys274 form a disordered region.

Belongs to the universal ribosomal protein uL2 family. As to quaternary structure, part of the 50S ribosomal subunit. Forms a bridge to the 30S subunit in the 70S ribosome.

In terms of biological role, one of the primary rRNA binding proteins. Required for association of the 30S and 50S subunits to form the 70S ribosome, for tRNA binding and peptide bond formation. It has been suggested to have peptidyltransferase activity; this is somewhat controversial. Makes several contacts with the 16S rRNA in the 70S ribosome. This chain is Large ribosomal subunit protein uL2, found in Shewanella sp. (strain ANA-3).